The following is a 90-amino-acid chain: Small ribosomal subunit protein bS20 (90 aa).

The protein belongs to the bacterial ribosomal protein bS20 family.

Its function is as follows. Binds directly to 16S ribosomal RNA. This chain is Small ribosomal subunit protein bS20, found in Mesomycoplasma hyopneumoniae (strain J / ATCC 25934 / NCTC 10110) (Mycoplasma hyopneumoniae).